Here is a 212-residue protein sequence, read N- to C-terminus: RNA chaperone ProQ (212 aa).

The interval 107–153 (QDKAKAKRVAQAKSANPAAKTAKKPVKKPVAKRPKQTQSSKPAKEPV) is disordered. Positions 117–126 (QAKSANPAAK) are enriched in low complexity. Basic residues predominate over residues 127–141 (TAKKPVKKPVAKRPK).

This sequence belongs to the ProQ family.

Its subcellular location is the cytoplasm. Functionally, RNA chaperone with significant RNA binding, RNA strand exchange and RNA duplexing activities. This chain is RNA chaperone ProQ, found in Shewanella halifaxensis (strain HAW-EB4).